The sequence spans 250 residues: 2,3-bisphosphoglycerate-dependent phosphoglycerate mutase (250 aa).

Substrate contacts are provided by residues 10–17 (RHGESVWN), 23–24 (TG), Arg-62, 89–92 (ERHY), Lys-100, 116–117 (RR), and 185–186 (GN). The Tele-phosphohistidine intermediate role is filled by His-11. Residue Glu-89 is the Proton donor/acceptor of the active site.

Belongs to the phosphoglycerate mutase family. BPG-dependent PGAM subfamily. Homodimer.

The enzyme catalyses (2R)-2-phosphoglycerate = (2R)-3-phosphoglycerate. It functions in the pathway carbohydrate degradation; glycolysis; pyruvate from D-glyceraldehyde 3-phosphate: step 3/5. Catalyzes the interconversion of 2-phosphoglycerate and 3-phosphoglycerate. The chain is 2,3-bisphosphoglycerate-dependent phosphoglycerate mutase from Proteus mirabilis (strain HI4320).